The chain runs to 193 residues: Chlorate reductase assembly chaperone protein (193 aa).

This sequence belongs to the type II DMSO reductase enzyme chaperone family.

It is found in the cytoplasm. Functionally, may function as a system-specific chaperone protein essential for the assembly of an active chlorate reductase ClrABC. The polypeptide is Chlorate reductase assembly chaperone protein (clrD) (Ideonella dechloratans).